We begin with the raw amino-acid sequence, 1022 residues long: rDNA transcriptional regulator POL5 (1022 aa).

Composition is skewed to acidic residues over residues 706-719, 728-748, and 781-802; these read EEFE…DASE, SESE…EDEA, and DLDQ…ESMD. 2 disordered regions span residues 706–748 and 778–805; these read EEFE…EDEA and GEVD…DDEK. Ser789 carries the post-translational modification Phosphoserine.

The protein belongs to the MYBBP1A family. In terms of assembly, interacts with FRK1.

Its subcellular location is the nucleus. It is found in the nucleolus. It catalyses the reaction DNA(n) + a 2'-deoxyribonucleoside 5'-triphosphate = DNA(n+1) + diphosphate. Its activity is regulated as follows. Stimulated by PCNA and inhibited by aphidicolin. Its function is as follows. Plays an important role in the regulation of rRNA transcription. Binds near or at the enhancer region of rRNA repeating units. May have DNA polymerase activity, but it is not required for in vivo function. The protein is rDNA transcriptional regulator POL5 of Saccharomyces cerevisiae (strain ATCC 204508 / S288c) (Baker's yeast).